The following is a 714-amino-acid chain: DNA gyrase subunit B (714 aa).

Positions 492-606 (SELYVVEGDS…NGHVFLAQPP (115 aa)) constitute a Toprim domain. 3 residues coordinate Mg(2+): Glu-498, Asp-571, and Asp-573.

It belongs to the type II topoisomerase GyrB family. In terms of assembly, heterotetramer, composed of two GyrA and two GyrB chains. In the heterotetramer, GyrA contains the active site tyrosine that forms a transient covalent intermediate with DNA, while GyrB binds cofactors and catalyzes ATP hydrolysis. Mg(2+) is required as a cofactor. The cofactor is Mn(2+). Requires Ca(2+) as cofactor.

It localises to the cytoplasm. It carries out the reaction ATP-dependent breakage, passage and rejoining of double-stranded DNA.. DNA supercoiling is inhibited by EDTA, novobiocin, coumermycin and ciprofloxacin. In terms of biological role, a type II topoisomerase that negatively supercoils closed circular double-stranded DNA in an ATP-dependent manner and also catalyzes the interconversion of other topological isomers of double-stranded DNA rings, including catenanes and knotted rings. Relaxes negatively supercoiled DNA in an ATP-independent manner. A linear reaction intermediate can be trapped in the presence of the antibiotic ciprofloxacin. Negative supercoiling favors strand separation, and DNA replication, transcription, recombination and repair, all of which involve strand separation. Type II topoisomerases break and join 2 DNA strands simultaneously in an ATP-dependent manner. The chain is DNA gyrase subunit B from Mycobacterium bovis (strain BCG / Pasteur 1173P2).